We begin with the raw amino-acid sequence, 106 residues long: Iron-sulfur cluster assembly protein CyaY (106 aa).

It belongs to the frataxin family.

Involved in iron-sulfur (Fe-S) cluster assembly. May act as a regulator of Fe-S biogenesis. This chain is Iron-sulfur cluster assembly protein CyaY, found in Salmonella schwarzengrund (strain CVM19633).